Consider the following 480-residue polypeptide: Dimethyl-sulfide monooxygenase (480 aa).

5 residues coordinate FMN: Asp-58, Thr-104, His-154, Tyr-158, and Ser-230. The tract at residues 423 to 480 (QDSYKPGSLRRKLIGTNDGRVESTHPAAQYRDAYVGKESVADRTQPSPFANAKAPVAE) is disordered.

Belongs to the NtaA/SnaA/DszA monooxygenase family. As to quaternary structure, heterodimer of 2 subunits, DmoA and DmoB. FMN is required as a cofactor.

The catalysed reaction is dimethyl sulfide + NADH + O2 + H(+) = methanethiol + formaldehyde + NAD(+) + H2O. With respect to regulation, inhibited by umbelliferone, 8-anilinonaphthalenesulfonate, a range of metal-chelating agents, and Hg(2+), Cd(2+) and Pb(2+) ions. Its function is as follows. Monooxygenase that mediates oxidation of dimethyl sulfide, the first step in dimethyl sulfide degradation pathway. Has much lower activity with diethyl sulfide and other short-chain alkyl methyl sulfides. The chain is Dimethyl-sulfide monooxygenase (dmoA) from Hyphomicrobium sulfonivorans.